The sequence spans 306 residues: Ribonuclease Z (306 aa).

Zn(2+) is bound by residues H61, H63, D65, H66, H137, D207, and H263. The Proton acceptor role is filled by D65.

Belongs to the RNase Z family. As to quaternary structure, homodimer. Zn(2+) is required as a cofactor.

It catalyses the reaction Endonucleolytic cleavage of RNA, removing extra 3' nucleotides from tRNA precursor, generating 3' termini of tRNAs. A 3'-hydroxy group is left at the tRNA terminus and a 5'-phosphoryl group is left at the trailer molecule.. In terms of biological role, zinc phosphodiesterase, which displays some tRNA 3'-processing endonuclease activity. Probably involved in tRNA maturation, by removing a 3'-trailer from precursor tRNA. The polypeptide is Ribonuclease Z (Thermococcus sibiricus (strain DSM 12597 / MM 739)).